Consider the following 175-residue polypeptide: uncharacterized protein (175 aa).

The transit peptide at 1 to 11 (METWRKGSFRN) directs the protein to the mitochondrion. The segment at 24–92 (RRLRRQSSVL…PRLYRESSSC (69 aa)) is disordered. Residues 41 to 63 (GDHEEYSNREVIRELQGRPDGRR) are compositionally biased toward basic and acidic residues.

It localises to the mitochondrion. This is an uncharacterized protein from Homo sapiens (Human).